Reading from the N-terminus, the 644-residue chain is 1,4-alpha-glucan branching enzyme GlgB (644 aa).

D309 acts as the Nucleophile in catalysis. E362 acts as the Proton donor in catalysis.

Belongs to the glycosyl hydrolase 13 family. GlgB subfamily. As to quaternary structure, monomer.

The catalysed reaction is Transfers a segment of a (1-&gt;4)-alpha-D-glucan chain to a primary hydroxy group in a similar glucan chain.. It functions in the pathway glycan biosynthesis; glycogen biosynthesis. Catalyzes the formation of the alpha-1,6-glucosidic linkages in glycogen by scission of a 1,4-alpha-linked oligosaccharide from growing alpha-1,4-glucan chains and the subsequent attachment of the oligosaccharide to the alpha-1,6 position. The polypeptide is 1,4-alpha-glucan branching enzyme GlgB (Cutibacterium acnes (strain DSM 16379 / KPA171202) (Propionibacterium acnes)).